Consider the following 340-residue polypeptide: DNA-directed RNA polymerase subunit alpha (340 aa).

The interval M1–D238 is alpha N-terminal domain (alpha-NTD). Positions A253 to A340 are alpha C-terminal domain (alpha-CTD).

It belongs to the RNA polymerase alpha chain family. As to quaternary structure, homodimer. The RNAP catalytic core consists of 2 alpha, 1 beta, 1 beta' and 1 omega subunit. When a sigma factor is associated with the core the holoenzyme is formed, which can initiate transcription.

It carries out the reaction RNA(n) + a ribonucleoside 5'-triphosphate = RNA(n+1) + diphosphate. In terms of biological role, DNA-dependent RNA polymerase catalyzes the transcription of DNA into RNA using the four ribonucleoside triphosphates as substrates. The polypeptide is DNA-directed RNA polymerase subunit alpha (Myxococcus xanthus (strain DK1622)).